Reading from the N-terminus, the 230-residue chain is Large ribosomal subunit protein uL1 (230 aa).

Belongs to the universal ribosomal protein uL1 family. Part of the 50S ribosomal subunit.

In terms of biological role, binds directly to 23S rRNA. The L1 stalk is quite mobile in the ribosome, and is involved in E site tRNA release. Protein L1 is also a translational repressor protein, it controls the translation of the L11 operon by binding to its mRNA. This chain is Large ribosomal subunit protein uL1, found in Leptospira borgpetersenii serovar Hardjo-bovis (strain JB197).